An 876-amino-acid chain; its full sequence is Alanine--tRNA ligase (876 aa).

Position 74 is an N6-acetyllysine (K74). Zn(2+) is bound by residues H564, H568, C666, and H670.

The protein belongs to the class-II aminoacyl-tRNA synthetase family. As to quaternary structure, homotetramer. Zn(2+) is required as a cofactor.

Its subcellular location is the cytoplasm. It carries out the reaction tRNA(Ala) + L-alanine + ATP = L-alanyl-tRNA(Ala) + AMP + diphosphate. Functionally, catalyzes the attachment of alanine to tRNA(Ala) in a two-step reaction: alanine is first activated by ATP to form Ala-AMP and then transferred to the acceptor end of tRNA(Ala). Also edits incorrectly charged Ser-tRNA(Ala) and Gly-tRNA(Ala) via its editing domain. This chain is Alanine--tRNA ligase, found in Escherichia coli O157:H7.